The primary structure comprises 1072 residues: Rho family-interacting cell polarization regulator 2 (1072 aa).

The stretch at 83 to 112 (NGLDEYLEVHQTELDKLTAQLKDMRRNSRL) forms a coiled coil. The necessary for interaction with NCAM and myoblast protrusion formation stretch occupies residues 173-470 (RESLTEINRS…ATTATQHRAR (298 aa)). 2 disordered regions span residues 439–465 (DRVP…TTAT) and 683–718 (EVEK…AGSP). Over residues 447 to 460 (AEPSSAHVTSSPDI) the composition is skewed to polar residues. Residues 683 to 698 (EVEKNSYRTEHPEARG) are compositionally biased toward basic and acidic residues.

The protein belongs to the RIPOR family. In terms of assembly, homooligomer; homooligomerization is regulated by RHOC and leads to the formation of concatemers through the association of N- and C-termini. Interacts with NCAM; this interaction is necessary for myoblast protrusion formation. In terms of tissue distribution, expressed in myoblast and myotubes (at protein level). Expressed in brain, eyes and skeletal muscle.

It localises to the cytoplasm. The protein localises to the cytoskeleton. Its subcellular location is the cell projection. The protein resides in the filopodium. It is found in the apical cell membrane. It localises to the stereocilium. The protein localises to the stereocilium membrane. Acts as an inhibitor of the small GTPase RHOA and plays several roles in the regulation of myoblast and hair cell differentiation, lymphocyte T proliferation and neutrophil polarization. Plays a role in fetal mononuclear myoblast differentiation by promoting filopodia and myotube formation. Maintains naive T lymphocytes in a quiescent state and prevents chemokine-induced T lymphocyte responses, such as cell adhesion, polarization and migration. Involved also in the regulation of neutrophil polarization, chemotaxis and adhesion. Required for normal development of inner and outer hair cell stereocilia within the cochlea of the inner ear. Plays a role for maintaining the structural organization of the basal domain of stereocilia. Involved in mechanosensory hair cell function. Required for normal hearing. The sequence is that of Rho family-interacting cell polarization regulator 2 from Coturnix japonica (Japanese quail).